Here is a 180-residue protein sequence, read N- to C-terminus: Large ribosomal subunit protein uL5 (180 aa).

This sequence belongs to the universal ribosomal protein uL5 family. In terms of assembly, part of the 50S ribosomal subunit; part of the 5S rRNA/L5/L18/L25 subcomplex. Contacts the 5S rRNA and the P site tRNA. Forms a bridge to the 30S subunit in the 70S ribosome.

Its function is as follows. This is one of the proteins that bind and probably mediate the attachment of the 5S RNA into the large ribosomal subunit, where it forms part of the central protuberance. In the 70S ribosome it contacts protein S13 of the 30S subunit (bridge B1b), connecting the 2 subunits; this bridge is implicated in subunit movement. Contacts the P site tRNA; the 5S rRNA and some of its associated proteins might help stabilize positioning of ribosome-bound tRNAs. The sequence is that of Large ribosomal subunit protein uL5 from Limosilactobacillus fermentum (strain NBRC 3956 / LMG 18251) (Lactobacillus fermentum).